A 257-amino-acid chain; its full sequence is NAD-capped RNA hydrolase NudC (257 aa).

Arg-69 contributes to the substrate binding site. Zn(2+)-binding residues include Cys-98 and Cys-101. Glu-111 provides a ligand contact to substrate. Zn(2+)-binding residues include Cys-116 and Cys-119. Tyr-124 serves as a coordination point for substrate. The 124-residue stretch at 125 to 248 (PQIAPCIIVA…TVARRLIEDT (124 aa)) folds into the Nudix hydrolase domain. Residues Ala-158, Glu-174, and Glu-178 each contribute to the a divalent metal cation site. The Nudix box motif lies at 159–180 (GFVEVGETLEQAAAREIFEESR). 192-199 (QPWPFPHS) is a binding site for substrate. Glu-219 is an a divalent metal cation binding site. A substrate-binding site is contributed by Ala-241.

The protein belongs to the Nudix hydrolase family. NudC subfamily. In terms of assembly, homodimer. It depends on Mg(2+) as a cofactor. Mn(2+) is required as a cofactor. Requires Zn(2+) as cofactor.

The catalysed reaction is a 5'-end NAD(+)-phospho-ribonucleoside in mRNA + H2O = a 5'-end phospho-adenosine-phospho-ribonucleoside in mRNA + beta-nicotinamide D-ribonucleotide + 2 H(+). The enzyme catalyses NAD(+) + H2O = beta-nicotinamide D-ribonucleotide + AMP + 2 H(+). It carries out the reaction NADH + H2O = reduced beta-nicotinamide D-ribonucleotide + AMP + 2 H(+). Its function is as follows. mRNA decapping enzyme that specifically removes the nicotinamide adenine dinucleotide (NAD) cap from a subset of mRNAs by hydrolyzing the diphosphate linkage to produce nicotinamide mononucleotide (NMN) and 5' monophosphate mRNA. The NAD-cap is present at the 5'-end of some mRNAs and stabilizes RNA against 5'-processing. Has preference for mRNAs with a 5'-end purine. Catalyzes the hydrolysis of a broad range of dinucleotide pyrophosphates. The polypeptide is NAD-capped RNA hydrolase NudC (Edwardsiella ictaluri (strain 93-146)).